Reading from the N-terminus, the 311-residue chain is Catabolite control protein B (311 aa).

The HTH lacI-type domain maps to 1-56; sequence MANIKEIARLANVSVSTVSRVLNHHPYVSEEKRKLVHQVMKELDYTPNRTAIDLIR. Residues 4 to 23 constitute a DNA-binding region (H-T-H motif); sequence IKEIARLANVSVSTVSRVLN.

Seems to be complexed to phosphorylated HPr.

Its function is as follows. Transcriptional regulator involved in catabolite repression of several operons. The chain is Catabolite control protein B (ccpB) from Bacillus subtilis (strain 168).